We begin with the raw amino-acid sequence, 160 residues long: Cyclic pyranopterin monophosphate synthase (160 aa).

Residues 75–77 and 116–117 each bind substrate; these read MCH and ME. Asp-131 is a catalytic residue.

Belongs to the MoaC family. Homohexamer; trimer of dimers.

The enzyme catalyses (8S)-3',8-cyclo-7,8-dihydroguanosine 5'-triphosphate = cyclic pyranopterin phosphate + diphosphate. Its pathway is cofactor biosynthesis; molybdopterin biosynthesis. Its function is as follows. Catalyzes the conversion of (8S)-3',8-cyclo-7,8-dihydroguanosine 5'-triphosphate to cyclic pyranopterin monophosphate (cPMP). The chain is Cyclic pyranopterin monophosphate synthase from Staphylococcus haemolyticus (strain JCSC1435).